We begin with the raw amino-acid sequence, 221 residues long: MKAAVLVFPGSNCDRDLAVAIEKICGTKPLMVWHQESELPDDLDLIAVPGGFSYGDYLRSGAMAARSAVMPAVIKQAERGVPVLGICNGFQILTEAGLLPGALMRNAGLSFICRNVGLEIQNTTSPFLRLYKKNQKIHLPVAHHDGNYTADEATLDQLEDEDRVALRYTESVNGSARNIAGVLNKKGNVLGLMPHPERMIEDAHGGKDGYNMFASLMQVMA.

Residues 3 to 221 (AAVLVFPGSN…MFASLMQVMA (219 aa)) enclose the Glutamine amidotransferase type-1 domain. Catalysis depends on Cys-87, which acts as the Nucleophile. Active-site residues include His-195 and Glu-197.

Part of the FGAM synthase complex composed of 1 PurL, 1 PurQ and 2 PurS subunits.

The protein localises to the cytoplasm. It carries out the reaction N(2)-formyl-N(1)-(5-phospho-beta-D-ribosyl)glycinamide + L-glutamine + ATP + H2O = 2-formamido-N(1)-(5-O-phospho-beta-D-ribosyl)acetamidine + L-glutamate + ADP + phosphate + H(+). It catalyses the reaction L-glutamine + H2O = L-glutamate + NH4(+). The protein operates within purine metabolism; IMP biosynthesis via de novo pathway; 5-amino-1-(5-phospho-D-ribosyl)imidazole from N(2)-formyl-N(1)-(5-phospho-D-ribosyl)glycinamide: step 1/2. Functionally, part of the phosphoribosylformylglycinamidine synthase complex involved in the purines biosynthetic pathway. Catalyzes the ATP-dependent conversion of formylglycinamide ribonucleotide (FGAR) and glutamine to yield formylglycinamidine ribonucleotide (FGAM) and glutamate. The FGAM synthase complex is composed of three subunits. PurQ produces an ammonia molecule by converting glutamine to glutamate. PurL transfers the ammonia molecule to FGAR to form FGAM in an ATP-dependent manner. PurS interacts with PurQ and PurL and is thought to assist in the transfer of the ammonia molecule from PurQ to PurL. This Zymomonas mobilis subsp. mobilis (strain ATCC 31821 / ZM4 / CP4) protein is Phosphoribosylformylglycinamidine synthase subunit PurQ.